We begin with the raw amino-acid sequence, 396 residues long: 1-deoxy-D-xylulose 5-phosphate reductoisomerase (396 aa).

NADPH-binding residues include Thr-10, Gly-11, Ser-12, Ile-13, and Asn-123. Lys-124 lines the 1-deoxy-D-xylulose 5-phosphate pocket. Glu-125 contacts NADPH. Asp-149 lines the Mn(2+) pocket. The 1-deoxy-D-xylulose 5-phosphate site is built by Ser-150, Glu-151, Ser-185, and His-208. Residue Glu-151 coordinates Mn(2+). Gly-214 is a binding site for NADPH. The 1-deoxy-D-xylulose 5-phosphate site is built by Ser-221, Asn-226, Lys-227, and Glu-230. Position 230 (Glu-230) interacts with Mn(2+).

Belongs to the DXR family. Mg(2+) is required as a cofactor. The cofactor is Mn(2+).

The catalysed reaction is 2-C-methyl-D-erythritol 4-phosphate + NADP(+) = 1-deoxy-D-xylulose 5-phosphate + NADPH + H(+). Its pathway is isoprenoid biosynthesis; isopentenyl diphosphate biosynthesis via DXP pathway; isopentenyl diphosphate from 1-deoxy-D-xylulose 5-phosphate: step 1/6. Functionally, catalyzes the NADPH-dependent rearrangement and reduction of 1-deoxy-D-xylulose-5-phosphate (DXP) to 2-C-methyl-D-erythritol 4-phosphate (MEP). The sequence is that of 1-deoxy-D-xylulose 5-phosphate reductoisomerase from Shewanella sp. (strain MR-7).